The primary structure comprises 523 residues: Calcium-dependent protein kinase 34 (523 aa).

Residues 1-60 are disordered; that stretch reads MGNCCSHGRDSDDNKEEPRPENGGGGVGAAEASVRASKHPPASPPPATKQGPIGPVLGRP. Gly-2 is lipidated: N-myristoyl glycine. Residues 7–20 are compositionally biased toward basic and acidic residues; sequence HGRDSDDNKEEPRP. The Protein kinase domain maps to 68–326; it reads YTLGKELGRG…AAQVLNHPWI (259 aa). ATP contacts are provided by residues 74-82 and Lys-97; that span reads LGRGQFGVT. Asp-192 acts as the Proton acceptor in catalysis. Phosphoserine is present on Ser-232. Positions 332 to 362 are autoinhibitory domain; that stretch reads APDVPLDNAVMSRLKQFKAMNNFKKVALRVI. EF-hand domains follow at residues 369 to 404, 405 to 440, 441 to 476, and 480 to 511; these read EEIM…QGTR, LSEY…INRL, DREE…FGMN, and DIKE…GNPD. Positions 382, 384, 386, 388, 393, 418, 420, 422, 424, 429, 454, 456, 458, 460, 465, 489, 491, 493, 495, and 500 each coordinate Ca(2+).

Belongs to the protein kinase superfamily. Ser/Thr protein kinase family. CDPK subfamily.

It is found in the membrane. The catalysed reaction is L-seryl-[protein] + ATP = O-phospho-L-seryl-[protein] + ADP + H(+). It catalyses the reaction L-threonyl-[protein] + ATP = O-phospho-L-threonyl-[protein] + ADP + H(+). Activated by calcium. Autophosphorylation may play an important role in the regulation of the kinase activity. May play a role in signal transduction pathways that involve calcium as a second messenger. This chain is Calcium-dependent protein kinase 34 (CPK34), found in Arabidopsis thaliana (Mouse-ear cress).